The primary structure comprises 130 residues: Glutamate-rich protein 4 (130 aa).

Residues 91 to 104 (EEEEESSKEEEEDQ) show a composition bias toward acidic residues. Residues 91–130 (EEEEESSKEEEEDQEPQRKQEEEHLEACPAPHPPDFEMMI) are disordered. Positions 105-116 (EPQRKQEEEHLE) are enriched in basic and acidic residues.

In Homo sapiens (Human), this protein is Glutamate-rich protein 4 (ERICH4).